The sequence spans 177 residues: Putative adenylate kinase (177 aa).

Residues Gly10, Gly12, Lys13, Thr14, and Thr15 each coordinate ATP. The segment at 30-50 is NMP; it reads NLRDYALEKGIGEMKENELEI. Residues 99–109 form an LID region; sequence ERGYGREKLGE. Residues Arg100 and Lys138 each contribute to the ATP site.

This sequence belongs to the adenylate kinase family. AK6 subfamily. Interacts with uS11. Not a structural component of 40S pre-ribosomes, but transiently interacts with them by binding to uS11.

The enzyme catalyses AMP + ATP = 2 ADP. It carries out the reaction ATP + H2O = ADP + phosphate + H(+). Functionally, broad-specificity nucleoside monophosphate (NMP) kinase that catalyzes the reversible transfer of the terminal phosphate group between nucleoside triphosphates and monophosphates. Also has ATPase activity. Involved in the late maturation steps of the 30S ribosomal particles, specifically 16S rRNA maturation. While NMP activity is not required for ribosome maturation, ATPase activity is. Associates transiently with small ribosomal subunit protein uS11. ATP hydrolysis breaks the interaction with uS11. May temporarily remove uS11 from the ribosome to enable a conformational change of the ribosomal RNA that is needed for the final maturation step of the small ribosomal subunit. The protein is Putative adenylate kinase of Thermococcus kodakarensis (strain ATCC BAA-918 / JCM 12380 / KOD1) (Pyrococcus kodakaraensis (strain KOD1)).